The chain runs to 84 residues: Cell division topological specificity factor (84 aa).

The protein belongs to the MinE family.

Functionally, prevents the cell division inhibition by proteins MinC and MinD at internal division sites while permitting inhibition at polar sites. This ensures cell division at the proper site by restricting the formation of a division septum at the midpoint of the long axis of the cell. The polypeptide is Cell division topological specificity factor (Chromohalobacter salexigens (strain ATCC BAA-138 / DSM 3043 / CIP 106854 / NCIMB 13768 / 1H11)).